We begin with the raw amino-acid sequence, 220 residues long: Botcinic acid biosynthesis cluster B protein 12 (220 aa).

Its pathway is polyketide biosynthesis. Part of the gene cluster B that mediates the biosynthesis of botcinic acid and its botcinin derivatives, acetate-derived polyketides that contribute to virulence when combined with the sesquiterpene botrydial. Botcinic acid and its derivatives have been shown to induce chlorosis and necrosis during host plant infection, but also have antifungal activities. Two polyketide synthases, BOA6 and BOA9, are involved in the biosynthesis of botcinins. BOA6 mediates the formation of the per-methylated tetraketide core by condensation of four units of malonyl-CoA with one unit of acetyl-CoA, which would be methylated in activated methylene groups to yield a bicyclic acid intermediate that could then either be converted to botrylactone derivatives or lose the starter acetate unit through a retro-Claisen type C-C bond cleavage to yield botcinin derivatives. The second polyketide synthase, BOA9, is probably required for the biosynthesis of the tetraketide side chain of botcinins. The methyltransferase (MT) domain within BOA6 is probably responsible for the incorporation of four methyl groups. The trans-enoyl reductase BOA5 might take over the enoyl reductase function of BOA6 that misses an ER domain. The monooxygenases BOA2, BOA3 and BOA4 might be involved in further hydroxylations at C4, C5 and C8, whereas BOA7, close to BOA9, could potentially be involved in the hydroxylation at C4 in the side chain of botcinins. In Botryotinia fuckeliana (strain B05.10) (Noble rot fungus), this protein is Botcinic acid biosynthesis cluster B protein 12.